Consider the following 73-residue polypeptide: Venom protein 55.1 (73 aa).

The first 19 residues, 1–19 (MNFLCILFVVSLISSLSKC), serve as a signal peptide directing secretion. Proline amide is present on Pro57. Positions 61 to 73 (RRSFDLYALVNAK) are excised as a propeptide.

This sequence belongs to the diuretic hormone class 2 family. Expressed by the venom gland.

Its subcellular location is the secreted. In terms of biological role, regulates fluid secretion. The protein is Venom protein 55.1 of Lychas mucronatus (Chinese swimming scorpion).